A 434-amino-acid polypeptide reads, in one-letter code: F-box/FBD/LRR-repeat protein At3g26920 (434 aa).

Positions 16–65 (EDRISQLPEALLLQILSLLPTKEVVAVSVLAKRWRFLWKMVPSLEFFYYF) constitute an F-box domain. 7 LRR repeats span residues 69–95 (LERF…HLNM), 100–125 (DPRI…VLKV), 145–172 (TLEL…NLHE), 173–198 (VEFV…VIHQ), 219–244 (VIVE…KIEG), 265–290 (IIDV…SLKV), and 315–341 (TYKP…KIFD). The FBD domain maps to 353 to 403 (KWNEPKNVPECLLLHLETFVWTCYEGKLENEIELAKYILRNARRLKKATFS).

The chain is F-box/FBD/LRR-repeat protein At3g26920 from Arabidopsis thaliana (Mouse-ear cress).